The sequence spans 232 residues: Sugar fermentation stimulation protein homolog (232 aa).

It belongs to the SfsA family.

The sequence is that of Sugar fermentation stimulation protein homolog from Moorella thermoacetica (strain ATCC 39073 / JCM 9320).